Here is a 69-residue protein sequence, read N- to C-terminus: Guanine nucleotide-binding protein subunit gamma (69 aa).

At S2 the chain carries N-acetylserine. C66 bears the Cysteine methyl ester mark. C66 carries S-geranylgeranyl cysteine lipidation. Positions S67–L69 are cleaved as a propeptide — removed in mature form.

Belongs to the G protein gamma family. In terms of assembly, g proteins are composed of 3 units, alpha, beta and gamma. Interacts with gpbA, and this requires phlp1. This protein is thought to be subject to lipidation, and this requires phlp1.

The protein resides in the cell membrane. Its function is as follows. Guanine nucleotide-binding proteins (G proteins) are involved as a modulator or transducer in various transmembrane signaling systems. This major G-protein of the squid photoreceptor is involved in visual transduction. The beta and gamma chains are required for the GTPase activity, for replacement of GDP by GTP, and for G protein-effector interaction. Required for normal chemotaxis in response to cAMP. This Dictyostelium discoideum (Social amoeba) protein is Guanine nucleotide-binding protein subunit gamma (gpgA).